A 239-amino-acid polypeptide reads, in one-letter code: Serine protease SplC (239 aa).

Residues methionine 1–alanine 36 form the signal peptide. Residues histidine 75, aspartate 113, and serine 193 each act as charge relay system in the active site.

This sequence belongs to the peptidase S1B family.

It is found in the secreted. This Staphylococcus aureus (strain MSSA476) protein is Serine protease SplC (splC).